We begin with the raw amino-acid sequence, 209 residues long: Small ribosomal subunit protein uS4 (209 aa).

Positions 9, 12, 26, and 31 each coordinate Zn(2+). A C4-type zinc finger spans residues 9–31 (CKLCRREGMKLYLKGERCYTDKC). The S4 RNA-binding domain occupies 98 to 161 (ARLDNVVYRM…RDLEVIKKAI (64 aa)).

Belongs to the universal ribosomal protein uS4 family. As to quaternary structure, part of the 30S ribosomal subunit. Contacts protein S5. The interaction surface between S4 and S5 is involved in control of translational fidelity. It depends on Zn(2+) as a cofactor.

In terms of biological role, one of the primary rRNA binding proteins, it binds directly to 16S rRNA where it nucleates assembly of the body of the 30S subunit. With S5 and S12 plays an important role in translational accuracy. The protein is Small ribosomal subunit protein uS4 (rpsD) of Thermotoga maritima (strain ATCC 43589 / DSM 3109 / JCM 10099 / NBRC 100826 / MSB8).